The sequence spans 620 residues: UPF0313 protein BT_0254 (620 aa).

A Radical SAM core domain is found at 311–591; it reads AYDMIKFSVN…AQRQFFFWYK (281 aa). [4Fe-4S] cluster-binding residues include C325, C329, and C332.

This sequence belongs to the UPF0313 family. Requires [4Fe-4S] cluster as cofactor.

The chain is UPF0313 protein BT_0254 from Bacteroides thetaiotaomicron (strain ATCC 29148 / DSM 2079 / JCM 5827 / CCUG 10774 / NCTC 10582 / VPI-5482 / E50).